Reading from the N-terminus, the 182-residue chain is Isopentenyl-diphosphate Delta-isomerase (182 aa).

2 residues coordinate Mn(2+): His25 and His32. Cys67 is an active-site residue. His69 lines the Mn(2+) pocket. Glu87 provides a ligand contact to Mg(2+). 2 residues coordinate Mn(2+): Glu114 and Glu116. Glu116 is an active-site residue.

This sequence belongs to the IPP isomerase type 1 family. In terms of assembly, homodimer. Requires Mg(2+) as cofactor. It depends on Mn(2+) as a cofactor.

The protein resides in the cytoplasm. The catalysed reaction is isopentenyl diphosphate = dimethylallyl diphosphate. The protein operates within isoprenoid biosynthesis; dimethylallyl diphosphate biosynthesis; dimethylallyl diphosphate from isopentenyl diphosphate: step 1/1. Its function is as follows. Catalyzes the 1,3-allylic rearrangement of the homoallylic substrate isopentenyl (IPP) to its highly electrophilic allylic isomer, dimethylallyl diphosphate (DMAPP). This is Isopentenyl-diphosphate Delta-isomerase from Escherichia coli (strain K12 / MC4100 / BW2952).